We begin with the raw amino-acid sequence, 1058 residues long: Carbamoyl phosphate synthase large chain (1058 aa).

The segment at 1 to 401 is carboxyphosphate synthetic domain; it reads MPKRTDIQKI…SLLKACRSLE (401 aa). Positions 129, 169, 175, 176, 208, 210, 215, 241, 242, 243, 284, and 298 each coordinate ATP. The ATP-grasp 1 domain maps to 133-327; the sequence is KQLMEELEQP…IAKLAAKIAV (195 aa). Residues glutamine 284, glutamate 298, and asparagine 300 each contribute to the Mg(2+) site. Residues glutamine 284, glutamate 298, and asparagine 300 each coordinate Mn(2+). Residues 402–546 form an oligomerization domain region; that stretch reads IGVHHNEIPE…YSTYGWENES (145 aa). The segment at 547–929 is carbamoyl phosphate synthetic domain; sequence IRSDKESVLV…ALYKAFEASY (383 aa). The region spanning 671-861 is the ATP-grasp 2 domain; sequence EQALKELDIP…MAQVATKLIL (191 aa). Residues arginine 707, serine 746, isoleucine 748, glutamate 752, glycine 777, valine 778, histidine 779, serine 780, glutamine 820, and glutamate 832 each coordinate ATP. Glutamine 820, glutamate 832, and asparagine 834 together coordinate Mg(2+). Mn(2+)-binding residues include glutamine 820, glutamate 832, and asparagine 834. The MGS-like domain occupies 930–1058; it reads LHLPTFGNVV…ESRSFVTEAI (129 aa). Residues 930-1058 form an allosteric domain region; sequence LHLPTFGNVV…ESRSFVTEAI (129 aa).

The protein belongs to the CarB family. As to quaternary structure, composed of two chains; the small (or glutamine) chain promotes the hydrolysis of glutamine to ammonia, which is used by the large (or ammonia) chain to synthesize carbamoyl phosphate. Tetramer of heterodimers (alpha,beta)4. Mg(2+) is required as a cofactor. It depends on Mn(2+) as a cofactor.

It catalyses the reaction hydrogencarbonate + L-glutamine + 2 ATP + H2O = carbamoyl phosphate + L-glutamate + 2 ADP + phosphate + 2 H(+). The enzyme catalyses hydrogencarbonate + NH4(+) + 2 ATP = carbamoyl phosphate + 2 ADP + phosphate + 2 H(+). It functions in the pathway amino-acid biosynthesis; L-arginine biosynthesis; carbamoyl phosphate from bicarbonate: step 1/1. The protein operates within pyrimidine metabolism; UMP biosynthesis via de novo pathway; (S)-dihydroorotate from bicarbonate: step 1/3. Its function is as follows. Large subunit of the glutamine-dependent carbamoyl phosphate synthetase (CPSase). CPSase catalyzes the formation of carbamoyl phosphate from the ammonia moiety of glutamine, carbonate, and phosphate donated by ATP, constituting the first step of 2 biosynthetic pathways, one leading to arginine and/or urea and the other to pyrimidine nucleotides. The large subunit (synthetase) binds the substrates ammonia (free or transferred from glutamine from the small subunit), hydrogencarbonate and ATP and carries out an ATP-coupled ligase reaction, activating hydrogencarbonate by forming carboxy phosphate which reacts with ammonia to form carbamoyl phosphate. The protein is Carbamoyl phosphate synthase large chain of Streptococcus pneumoniae (strain JJA).